A 722-amino-acid polypeptide reads, in one-letter code: MDGYDRRAPYDLNSRKINHPDFESVMSQRDTFNNVSSKQCMENQWIVIHPTRQTRMFKEILAGRLGYTDGQGIYNSVRSTETAIRQIQNTILTLSLDAVRYDDLKNDWIRHADMRGMSAKKLARTYGMHSEAEAVKVAENVFVTWRKTLQTTLINLARQLISCFTTANINTSSFSKYIDWICCLGIVPVVRHDRSARATSSIPTCAGRSTVFPNWAFHDASSRLRVVDSVMARGKQIVNYLSNSMSAVSILEYDRTLIEYNFFKRELRVKDILSGERGECIVIWRPVMNDGGVIFDSPMQRIYKEIIECHDLRQHATLCRLVNTAPVKVLIAKRDDGCKGVAGAQRVIDKVLGDQPENAASSAASRLVKLIIGLKGMRHVGDITDTVRDYLEETSGHLLDAASIDTSQPGFGQSNRAQSSTTEETRRNTIKIRDAFHSSVVTSINEMLEGYVNKLFNTVEGLKAANKDLLAKLCSKELELDRVRTEHLISKQAHTDMGNSQYSPTLETLARDLKHDVIDVGEVMDDDSYVANSFQSRYIPAYDVDLKRLSELWEQEMLRCFKLTRATNNQGHEVSISYSNSAITLLLAPYFFSVLNIYDIGPIVTNHEVYKSEEELCNSVFEKTRIHVYLDDLALIFNADVKRAIAKYFLVRNNSGRQREAEDLPDGHHGRRNDFHSPSSRRERYSRRSGYKRHRWNRESRRDYRRTQSTTNGEDDDGSQRD.

The disordered stretch occupies residues 402–426 (ASIDTSQPGFGQSNRAQSSTTEETR). A compositionally biased stretch (polar residues) spans 404–422 (IDTSQPGFGQSNRAQSSTT). Positions 448-469 (LEGYVNKLFNTVEGLKAANKDL) are putative leucine zipper motif. Residues 658-683 (QREAEDLPDGHHGRRNDFHSPSSRRE) show a composition bias toward basic and acidic residues. The interval 658–722 (QREAEDLPDG…GEDDDGSQRD (65 aa)) is disordered. A compositionally biased stretch (basic residues) spans 684–696 (RYSRRSGYKRHRW). Residues 697-706 (NRESRRDYRR) are compositionally biased toward basic and acidic residues. Positions 713–722 (GEDDDGSQRD) are enriched in acidic residues.

It belongs to the herpesviridae portal protein family. As to quaternary structure, homododecamerizes. Interacts with terminase subunits TRM1 and TRM3.

The protein resides in the virion. The protein localises to the host nucleus. Its function is as follows. Forms a portal in the viral capsid through which viral DNA is translocated during DNA packaging. Assembles as a dodecamer at a single fivefold axe of the T=16 icosahedric capsid. Binds to the molecular motor that translocates the viral DNA, termed terminase. The protein is Portal protein (MDV018) of Gallid herpesvirus 2 (strain Chicken/Md5/ATCC VR-987) (GaHV-2).